We begin with the raw amino-acid sequence, 380 residues long: Erythronate-4-phosphate dehydrogenase (380 aa).

S45 and T66 together coordinate substrate. Residues D146 and T174 each coordinate NAD(+). Residue R207 is part of the active site. D231 is a binding site for NAD(+). E236 is a catalytic residue. The active-site Proton donor is H253. G256 serves as a coordination point for NAD(+). Y257 is a substrate binding site.

Belongs to the D-isomer specific 2-hydroxyacid dehydrogenase family. PdxB subfamily. Homodimer.

It localises to the cytoplasm. It catalyses the reaction 4-phospho-D-erythronate + NAD(+) = (R)-3-hydroxy-2-oxo-4-phosphooxybutanoate + NADH + H(+). It participates in cofactor biosynthesis; pyridoxine 5'-phosphate biosynthesis; pyridoxine 5'-phosphate from D-erythrose 4-phosphate: step 2/5. Functionally, catalyzes the oxidation of erythronate-4-phosphate to 3-hydroxy-2-oxo-4-phosphonooxybutanoate. The protein is Erythronate-4-phosphate dehydrogenase of Pseudomonas fluorescens (strain Pf0-1).